Consider the following 201-residue polypeptide: High mobility group protein homolog 068R (201 aa).

2 consecutive DNA-binding regions (HMG box) follow at residues 70 to 138 (PKRN…ELEK) and 143 to 201 (TPSK…KAAK).

The protein belongs to the IIV-6 401R family.

It localises to the host nucleus. The chain is High mobility group protein homolog 068R from Invertebrate iridescent virus 3 (IIV-3).